We begin with the raw amino-acid sequence, 366 residues long: NAD(P)H-quinone oxidoreductase subunit 1, chloroplastic (366 aa).

Helical transmembrane passes span 28–48 (IWLL…VLVI), 105–125 (IAVI…HLVL), 128–148 (LSIG…GLLM), 250–270 (SGIK…VSSL), 271–291 (FVTV…FIFI), 303–323 (IFGM…FLFI), and 346–366 (FLLP…LLSL).

The protein belongs to the complex I subunit 1 family. NDH is composed of at least 16 different subunits, 5 of which are encoded in the nucleus.

The protein localises to the plastid. Its subcellular location is the chloroplast thylakoid membrane. The enzyme catalyses a plastoquinone + NADH + (n+1) H(+)(in) = a plastoquinol + NAD(+) + n H(+)(out). It carries out the reaction a plastoquinone + NADPH + (n+1) H(+)(in) = a plastoquinol + NADP(+) + n H(+)(out). NDH shuttles electrons from NAD(P)H:plastoquinone, via FMN and iron-sulfur (Fe-S) centers, to quinones in the photosynthetic chain and possibly in a chloroplast respiratory chain. The immediate electron acceptor for the enzyme in this species is believed to be plastoquinone. Couples the redox reaction to proton translocation, and thus conserves the redox energy in a proton gradient. This Nandina domestica (Heavenly bamboo) protein is NAD(P)H-quinone oxidoreductase subunit 1, chloroplastic.